A 976-amino-acid polypeptide reads, in one-letter code: Probable outer membrane protein PmpA (976 aa).

Residues 1–50 form the signal peptide; the sequence is MNQVIKTIALCYQKYISRASNKTFSIHNTLSLSLLPKCLLGSLIIYTSHA. An Autotransporter domain is found at 671–976; the sequence is GNAIPNSLWS…SLSCGGYVGF (306 aa).

It belongs to the PMP outer membrane protein family.

Its subcellular location is the secreted. It is found in the cell wall. It localises to the cell outer membrane. The polypeptide is Probable outer membrane protein PmpA (pmpA) (Chlamydia muridarum (strain MoPn / Nigg)).